We begin with the raw amino-acid sequence, 135 residues long: Succinate dehydrogenase assembly factor 3, mitochondrial (135 aa).

The disordered stretch occupies residues 73 to 101 (KENSNNNDNYNNNNNDNNNDNNNFINIGQ). Over residues 75–95 (NSNNNDNYNNNNNDNNNDNNN) the composition is skewed to low complexity.

Belongs to the complex I LYR family. SDHAF3 subfamily. As to quaternary structure, interacts with the iron-sulfur protein subunit within the SDH catalytic dimer.

It is found in the mitochondrion matrix. Functionally, plays an essential role in the assembly of succinate dehydrogenase (SDH), an enzyme complex (also referred to as respiratory complex II) that is a component of both the tricarboxylic acid (TCA) cycle and the mitochondrial electron transport chain, and which couples the oxidation of succinate to fumarate with the reduction of ubiquinone (coenzyme Q) to ubiquinol. Promotes maturation of the iron-sulfur protein subunit of the SDH catalytic dimer, protecting it from the deleterious effects of oxidants. May act together with SDHAF1. This chain is Succinate dehydrogenase assembly factor 3, mitochondrial (acn9), found in Dictyostelium discoideum (Social amoeba).